A 352-amino-acid chain; its full sequence is Protein MGF 360-9L (352 aa).

Belongs to the asfivirus MGF 360 family. In terms of assembly, interacts with host STAT1; this interaction mediates STAT1 degradation through apoptosis. Interacts with host STAT2; this interaction mediates STAT2 degradation through the proteasome.

The protein resides in the host cytoplasm. In terms of biological role, plays a role in virus cell tropism, and may be required for efficient virus replication in macrophages. In Ornithodoros (relapsing fever ticks), this protein is Protein MGF 360-9L.